The sequence spans 561 residues: Carbohydrate sulfotransferase 15 (561 aa).

Over 1–80 (MRHCINCCIQ…FLRFRKGKRC (80 aa)) the chain is Cytoplasmic. The helical; Signal-anchor for type II membrane protein transmembrane segment at 81-101 (SLVFGLIIMTLVMASYILSGA) threads the bilayer. Topologically, residues 102 to 561 (HQELLISSPF…DDEAFAWKTT (460 aa)) are lumenal. 3'-phosphoadenylyl sulfate is bound at residue 263 to 267 (KCGTT). A glycan (N-linked (GlcNAc...) asparagine) is linked at asparagine 364. 3'-phosphoadenylyl sulfate contacts are provided by arginine 392 and serine 400.

It belongs to the sulfotransferase 1 family. In terms of assembly, homodimer; disulfide-linked (Potential). The relevance of homodimerization is however unsure. May interact with phosphorylated proteins in resting B-cells, including HCK. The cofactor is a divalent metal cation. Glutathione serves as cofactor. Glycosylated.

The protein localises to the golgi apparatus membrane. The catalysed reaction is dermatan 4'-sulfate + n 3'-phosphoadenylyl sulfate = dermatan 4',6'-bissulfate + n adenosine 3',5'-bisphosphate + n H(+). The enzyme catalyses chondroitin 4'-sulfate + n 3'-phosphoadenylyl sulfate = chondroitin 4',6'-bissulfate + n adenosine 3',5'-bisphosphate + n H(+). With respect to regulation, inhibited by phenyl beta-GalNAc(4,6-SO(4)). In terms of biological role, sulfotransferase that transfers sulfate from 3'-phosphoadenosine 5'-phosphosulfate (PAPS) to the C-6 hydroxyl group of the GalNAc 4-sulfate residue of chondroitin sulfate A and forms chondroitin sulfate E containing GlcA-GalNAc(4,6-SO(4)) repeating units. It also transfers sulfate to a unique non-reducing terminal sequence, GalNAc(4SO4)-GlcA(2SO4)-GalNAc(6SO4), to yield a highly sulfated structure similar to the structure found in thrombomodulin chondroitin sulfate. May also act as a B-cell receptor involved in BCR ligation-mediated early activation that mediate regulatory signals key to B-cell development and/or regulation of B-cell-specific RAG expression; however such results are unclear in vivo. This chain is Carbohydrate sulfotransferase 15 (Chst15), found in Rattus norvegicus (Rat).